Here is a 980-residue protein sequence, read N- to C-terminus: GPI inositol-deacylase (980 aa).

Over 1-7 the chain is Cytoplasmic; that stretch reads MFMFRNC. Residues 8-28 form a helical membrane-spanning segment; sequence AVLLVIGSICCFIYGLFRLHV. The Lumenal portion of the chain corresponds to 29–628; it reads EVEPNACRMT…EYSYSSALSR (600 aa). The active site involves Ser170. N-linked (GlcNAc...) asparagine glycans are attached at residues Asn427, Asn517, and Asn596. A helical membrane pass occupies residues 629–649; that stretch reads LVLEFYGWLPAHLVCVLLIVL. Residues 650 to 709 lie on the Cytoplasmic side of the membrane; it reads RKQVETFYDVGTFRSLRPYVGYLQYTSLYIVTACRLLKKLIISSRVFPEPEPLDYSINVS. The helical transmembrane segment at 710–730 threads the bilayer; the sequence is IVIHCAAIALSLLATLGTWLA. Over 731 to 774 the chain is Lumenal; that stretch reads LTLYGNAFYRLALRITRLSQATSNVMISIMTHLPITYGILTIAT. Residues 775 to 795 form a helical membrane-spanning segment; sequence AMGTCSGVGLLLAFVFYFLML. Residues 796–867 lie on the Cytoplasmic side of the membrane; the sequence is SNAYKDYLED…CVGLQNFSFH (72 aa). The tract at residues 821–853 is disordered; that stretch reads AVTEQEDATEEQNEEQNALKQNDEQKQQQQEEE. Residues 824–834 show a composition bias toward acidic residues; it reads EQEDATEEQNE. A helical transmembrane segment spans residues 868 to 888; the sequence is VTLLLMLFVQLLLNAPSSLAW. The Lumenal segment spans residues 889–895; it reads LRSRRHG. Residues 896-916 form a helical membrane-spanning segment; that stretch reads INLPDPSLYPSIVVLASLSLL. At 917–929 the chain is on the cytoplasmic side; the sequence is LQLRAPQKCQGYW. The chain crosses the membrane as a helical span at residues 930–950; that stretch reads MLSIAFYILAGVVLLYCQAAI. At 951–954 the chain is on the lumenal side; that stretch reads YRLT. The helical transmembrane segment at 955 to 975 threads the bilayer; that stretch reads YVIAGAFALLSAHQSLWILWG. The Cytoplasmic segment spans residues 976 to 980; the sequence is RVSRV.

It belongs to the GPI inositol-deacylase family.

The protein localises to the endoplasmic reticulum membrane. Its function is as follows. Involved in inositol deacylation of GPI-anchored proteins. This chain is GPI inositol-deacylase, found in Drosophila melanogaster (Fruit fly).